The chain runs to 121 residues: UPF0738 protein BPUM_1088 (121 aa).

The protein belongs to the UPF0738 family.

In Bacillus pumilus (strain SAFR-032), this protein is UPF0738 protein BPUM_1088.